We begin with the raw amino-acid sequence, 491 residues long: Rab5 GDP/GTP exchange factor (491 aa).

The interaction with ubiquitinated proteins stretch occupies residues 1–74 (MSLKSERRGI…EEEAFASSQS (74 aa)). An A20-type zinc finger spans residues 13-47 (DQSDLLCKKGCGYYGNPAWQGFCSKCWREEYHKAR). The Zn(2+) site is built by Cys19, Cys23, Cys35, and Cys38. Residues 66–85 (EEAFASSQSSQGAQSLTFSK) are disordered. Residues 69–84 (FASSQSSQGAQSLTFS) show a composition bias toward low complexity. Phosphoserine occurs at positions 124 and 132. N6-acetyllysine is present on residues Lys151 and Lys170. The VPS9 domain maps to 232 to 375 (EKKDLAIQKR…IEKLDAQSLN (144 aa)). 4 positions are modified to phosphoserine: Ser373, Ser377, Ser390, and Ser400. Positions 462 to 491 (PPNQPLAAIDSENVENDKLPPPLQPQVYAG) are disordered.

As to quaternary structure, interacts with RGS14; the interaction is GTP-dependent. Heterodimer with RABEP1. The heterodimer binds RAB4A and RAB5A that have been activated by GTP-binding. Interacts with RAB21, and with 100-fold lower affinity also with RAB22. Binds TSC2, GGA1, GGA2, GGA3, AP1G1 and AP1G2. Interacts with ubiquitinated EGFR. In terms of processing, monoubiquitinated.

The protein localises to the cytoplasm. The protein resides in the early endosome. It is found in the recycling endosome. In terms of biological role, rab effector protein acting as linker between gamma-adaptin, RAB4A or RAB5A. Involved in endocytic membrane fusion and membrane trafficking of recycling endosomes. Stimulates nucleotide exchange on RAB5A. Can act as a ubiquitin ligase. This chain is Rab5 GDP/GTP exchange factor (RABGEF1), found in Homo sapiens (Human).